A 92-amino-acid chain; its full sequence is Co-chaperonin GroES (92 aa).

The protein belongs to the GroES chaperonin family. As to quaternary structure, heptamer of 7 subunits arranged in a ring. Interacts with the chaperonin GroEL.

Its subcellular location is the cytoplasm. Together with the chaperonin GroEL, plays an essential role in assisting protein folding. The GroEL-GroES system forms a nano-cage that allows encapsulation of the non-native substrate proteins and provides a physical environment optimized to promote and accelerate protein folding. GroES binds to the apical surface of the GroEL ring, thereby capping the opening of the GroEL channel. This Thermotoga neapolitana protein is Co-chaperonin GroES.